The following is a 329-amino-acid chain: L-lactate dehydrogenase (329 aa).

NAD(+) contacts are provided by residues valine 18, glutamate 39, lysine 46, tyrosine 71, and 85–86 (GA). Substrate contacts are provided by glutamine 88 and arginine 94. NAD(+) contacts are provided by residues serine 107, 124-126 (AAN), and serine 149. 126 to 129 (NPVD) contacts substrate. 154–157 (DSAR) is a substrate binding site. Positions 159 and 174 each coordinate beta-D-fructose 1,6-bisphosphate. Residue histidine 181 is the Proton acceptor of the active site. Position 226 is a phosphotyrosine (tyrosine 226). Threonine 235 provides a ligand contact to substrate.

This sequence belongs to the LDH/MDH superfamily. LDH family. Homotetramer.

The protein localises to the cytoplasm. The enzyme catalyses (S)-lactate + NAD(+) = pyruvate + NADH + H(+). The protein operates within fermentation; pyruvate fermentation to lactate; (S)-lactate from pyruvate: step 1/1. Its activity is regulated as follows. Allosterically activated by fructose 1,6-bisphosphate (FBP). Functionally, catalyzes the conversion of lactate to pyruvate. This chain is L-lactate dehydrogenase, found in Streptococcus agalactiae serotype V (strain ATCC BAA-611 / 2603 V/R).